The sequence spans 388 residues: Sex-determination protein fem-3 (388 aa).

Repeat copies occupy residues Ser7–Val10, Ile110–Phe113, Ile141–Phe144, Tyr234–Thr237, Tyr284–Thr287, and Ser371–Val374.

Component of a complex containing fem-1, fem-2 and fem-3. Interacts with fem-1 and fem-2 (via N-terminus). Part of a E3 ubiquitin-protein ligase complex, at least composed of cul-2, elc-1, tra-1, fem-1, fem-2 and fem-3; mediates the ubiquitination and subsequent proteasomal degradation of tra-1. Interacts with tra-1. Interacts with sel-10. Interacts with tra-2.

Functionally, required for male development. In XO (male) animals, fem-3 directs male differentiation in all tissues. In XX (hermaphrodite) animals, it specifies the first 80 or so germ cells to be sperm. Negatively regulates male development when bound to tra-2. Together with fem-2 associates with the CBC(fem-1) E3 ubiquitin-protein ligase complex which mediates the ubiquitination and subsequent proteasomal degradation of tra-1. The sequence is that of Sex-determination protein fem-3 (fem-3) from Caenorhabditis elegans.